The following is a 100-amino-acid chain: U12-ctenitoxin-Pn1a (100 aa).

A signal peptide spans 1–28 (MKYRIFKMKYTLLFLSVIALVHIFAVEA). A propeptide spanning residues 29 to 41 (KDEPESDALVPQE) is cleaved from the precursor. Disulfide bonds link cysteine 44–cysteine 58, cysteine 51–cysteine 64, cysteine 57–cysteine 82, cysteine 66–cysteine 80, and cysteine 90–cysteine 97.

This sequence belongs to the neurotoxin 09 (Tx3-6) family. In terms of tissue distribution, expressed by the venom gland.

It is found in the secreted. Its function is as follows. Probable neurotoxin. The protein is U12-ctenitoxin-Pn1a of Phoneutria nigriventer (Brazilian armed spider).